The sequence spans 254 residues: 5-oxoprolinase subunit A (254 aa).

It belongs to the LamB/PxpA family. As to quaternary structure, forms a complex composed of PxpA, PxpB and PxpC.

It carries out the reaction 5-oxo-L-proline + ATP + 2 H2O = L-glutamate + ADP + phosphate + H(+). In terms of biological role, catalyzes the cleavage of 5-oxoproline to form L-glutamate coupled to the hydrolysis of ATP to ADP and inorganic phosphate. The sequence is that of 5-oxoprolinase subunit A from Acinetobacter baumannii (strain AB307-0294).